Here is a 1561-residue protein sequence, read N- to C-terminus: Formin-E (1561 aa).

Residues 1–28 (MDNHSSSSNPSSLSSSSSSSSSSSSFLS) are compositionally biased toward low complexity. Disordered regions lie at residues 1–63 (MDNH…EEKP), 77–187 (EEEE…GKLS), 211–279 (PIIV…SSED), and 305–365 (ILRS…NLNY). The segment covering 29 to 51 (DHVKKEEQNGLDTIKEEIENKIE) has biased composition (basic and acidic residues). A coiled-coil region spans residues 32 to 85 (KKEEQNGLDTIKEEIENKIENEEEEEKIEEKPIEKVEEEKIIVQKEEEEKIEEE). Acidic residues predominate over residues 80–89 (EKIEEEPIEK). Residues 103 to 120 (DNINTTVEAKTLETSTEP) are compositionally biased toward polar residues. Positions 158–208 (EQQEQQEKQKEETKPSIREEVKEKIKGKLSEIKEEIKDIKEEIKHVIREEV) form a coiled coil. Residues 162–187 (QQEKQKEETKPSIREEVKEKIKGKLS) show a composition bias toward basic and acidic residues. A compositionally biased stretch (pro residues) spans 220 to 229 (SPPPPPPPPS). A compositionally biased stretch (low complexity) spans 230–258 (ITVQSSSPVSSQISSPVSSPVSSPKPSVT). Positions 305–320 (ILRSKSSPNPGANNPN) are enriched in polar residues. Low complexity predominate over residues 326 to 365 (NNSSSSSSSNNNSDNNNNSDNNSNNNNINNNNSSSNNLNY). The Phorbol-ester/DAG-type zinc-finger motif lies at 379–427 (YHDFKIHRGTSSCVYCGENTRLWSTSYKCFFCGVVCHKKCLDSMNTIPC). Residues 465–534 (PSSITNSSSK…TSISSPPIAS (70 aa)) are compositionally biased toward low complexity. The segment at 465-549 (PSSITNSSSK…PLLQQQQQQQ (85 aa)) is disordered. Positions 541–573 (LLQQQQQQQQQQQQQQQQQQQQQQQQQQISTTQ) form a coiled coil. The GBD/FH3 domain occupies 581–929 (SEKPDDDMIN…QISLHKGGFE (349 aa)). Positions 952-989 (LNRKLGELEKQNIDKAMKIQEQDINIKSLLDLLKQLKD) form a coiled coil. Disordered regions lie at residues 1009–1092 (MEPP…VPKP), 1466–1508 (EEKR…SDED), and 1526–1561 (RQAK…PNKN). Low complexity predominate over residues 1017 to 1033 (SVKSPDDPNNAAPIVVA). One can recognise an FH1 domain in the interval 1019 to 1081 (KSPDDPNNAA…LGAKKPPAGV (63 aa)). Over residues 1034-1070 (PIPPPPPPISGAPPPPPPPPPPMKGGAGPPPPPPPPG) the composition is skewed to pro residues. Over residues 1071–1081 (KLGAKKPPAGV) the composition is skewed to low complexity. One can recognise an FH2 domain in the interval 1086 to 1475 (PPKVPKPSHP…EEKRLQQKQQ (390 aa)). Residues 1398–1491 (LATASTEVEK…RKLTTSNESA (94 aa)) are a coiled coil. Residues 1466–1481 (EEKRLQQKQQRQERAV) show a composition bias toward basic and acidic residues. 2 stretches are compositionally biased toward polar residues: residues 1484–1498 (LTTS…PNHA) and 1536–1561 (HQIA…PNKN). The 31-residue stretch at 1488-1518 (NESASASPNHAKSTDDKSDEDDDIVNDLLMA) folds into the DAD domain.

This sequence belongs to the formin homology family. Diaphanous subfamily. In terms of assembly, interacts (via GBD/FH3 domain) with activated Rho-GTPases.

Its function is as follows. Formins play an important role in the nucleation of actin and the formation of linear actin filaments. The protein is Formin-E (forE) of Dictyostelium discoideum (Social amoeba).